The chain runs to 362 residues: Putative sphingolipid delta(4)-desaturase/C4-monooxygenase (362 aa).

3 helical membrane-spanning segments follow: residues 45 to 61, 71 to 91, and 107 to 127; these read YVVS…CWLL, LEAY…IHDI, and FFGM…FKKY. Positions 89-93 match the Histidine box-1 motif; the sequence is HDISH. Positions 128–132 match the Histidine box-2 motif; the sequence is HVEHH. 2 helical membrane passes run 160–177 and 198–218; these read LLWL…PLII and LLIL…GTII. Positions 259-263 match the Histidine box-3 motif; it reads HVEHH.

It belongs to the fatty acid desaturase type 1 family. DEGS subfamily.

Its subcellular location is the membrane. The enzyme catalyses an N-acyl-15-methylhexadecasphinganine + 2 Fe(II)-[cytochrome b5] + O2 + 2 H(+) = an N-acyl-4-hydroxy-15-methylhexadecasphinganine + 2 Fe(III)-[cytochrome b5] + H2O. It catalyses the reaction an N-acyl-15-methylhexadecasphinganine + 2 Fe(II)-[cytochrome b5] + O2 + 2 H(+) = an N-acyl-15-methylhexadecasphing-4-enine + 2 Fe(III)-[cytochrome b5] + 2 H2O. It carries out the reaction a dihydroceramide + 2 Fe(II)-[cytochrome b5] + O2 + 2 H(+) = a phytoceramide + 2 Fe(III)-[cytochrome b5] + H2O. The catalysed reaction is an N-acylsphinganine + 2 Fe(II)-[cytochrome b5] + O2 + 2 H(+) = an N-acylsphing-4-enine + 2 Fe(III)-[cytochrome b5] + 2 H2O. The enzyme catalyses N-octanoylsphinganine + 2 Fe(II)-[cytochrome b5] + O2 + 2 H(+) = N-octanoyl-4-hydroxysphinganine + 2 Fe(III)-[cytochrome b5] + H2O. It catalyses the reaction an N-acylsphinganine + 2 Fe(II)-[cytochrome b5] + O2 + 2 H(+) = an N-acyl-(4R)-4-hydroxysphinganine + 2 Fe(III)-[cytochrome b5] + H2O. It functions in the pathway lipid metabolism; sphingolipid metabolism. Bifunctional enzyme which acts both as a sphingolipid delta(4)-desaturase and a sphingolipid C4-monooxygenase. C.elegans contain specific sphingoid bases, which are unique or different in structure compared to the sphingoid bases found in other animals. Two examples of these distinctive compounds are: 15-methylhexadecasphinganine and 15-methylhexadecasphing-4-enine and this enzyme can catalyze their conversion. This Caenorhabditis elegans protein is Putative sphingolipid delta(4)-desaturase/C4-monooxygenase (ttm-5).